A 513-amino-acid chain; its full sequence is Putative ribose/galactose/methyl galactoside import ATP-binding protein 2 (513 aa).

2 consecutive ABC transporter domains span residues 24 to 260 (LAAD…VGRE) and 270 to 510 (VPIG…VMDL). 56–63 (GENGAGKS) contributes to the ATP binding site.

This sequence belongs to the ABC transporter superfamily. Carbohydrate importer 2 (CUT2) (TC 3.A.1.2) family.

Its subcellular location is the cell inner membrane. It catalyses the reaction D-ribose(out) + ATP + H2O = D-ribose(in) + ADP + phosphate + H(+). The enzyme catalyses D-galactose(out) + ATP + H2O = D-galactose(in) + ADP + phosphate + H(+). Functionally, part of an ABC transporter complex involved in carbohydrate import. Could be involved in ribose, galactose and/or methyl galactoside import. Responsible for energy coupling to the transport system. In Agrobacterium fabrum (strain C58 / ATCC 33970) (Agrobacterium tumefaciens (strain C58)), this protein is Putative ribose/galactose/methyl galactoside import ATP-binding protein 2.